Consider the following 310-residue polypeptide: Olfactory receptor 1496 (310 aa).

At 1 to 23 (MNNQTFITQFLLLGLPIPEEHQH) the chain is on the extracellular side. A glycan (N-linked (GlcNAc...) asparagine) is linked at N3. The chain crosses the membrane as a helical span at residues 24-48 (LFYALFLVMYLTTILGNLLIIVLVQ). Topologically, residues 49–55 (LDSQLHT) are cytoplasmic. The chain crosses the membrane as a helical span at residues 56–77 (PMYLFLSNLSFSDLCFSSVTMP). Over 78-98 (KLLQNMRSQDTSIPYGGCLAQ) the chain is Extracellular. C95 and C187 are disulfide-bonded. A helical transmembrane segment spans residues 99–118 (TYFFMVFGDMESFLLVAMAY). Topologically, residues 119 to 137 (DRYVAICFPLHYTSIMSPK) are cytoplasmic. The helical transmembrane segment at 138 to 156 (LCTCLVLLLWMLTTSHAMM) threads the bilayer. At 157–194 (HTLLAARLSFCENNVVLNFFCDLFVLLKLACSDTYINE) the chain is on the extracellular side. A helical transmembrane segment spans residues 195–217 (LMIFIMSTLLIIIPFFLIVMSYA). Topologically, residues 218 to 234 (RIISSILKVPSTQGICK) are cytoplasmic. The helical transmembrane segment at 235–258 (VFSTCGSHLSVVSLFYGTIIGLYL) threads the bilayer. Residues 259–270 (CPAGNNSTVKEM) lie on the Extracellular side of the membrane. Residues 271–290 (VMAMMYTVVTPMLNPFIYSL) traverse the membrane as a helical segment. Residues 291–310 (RNRDMKRALIRVICSMKITL) lie on the Cytoplasmic side of the membrane.

The protein belongs to the G-protein coupled receptor 1 family. Olfactory epithelium.

The protein localises to the cell membrane. Odorant receptor. The polypeptide is Olfactory receptor 1496 (Olr1496) (Rattus norvegicus (Rat)).